Here is a 207-residue protein sequence, read N- to C-terminus: LysM and putative peptidoglycan-binding domain-containing protein 2 (207 aa).

Residues 61-105 enclose the LysM domain; sequence IEHRLSPSDTLQGIALKYGVTMEQIKRANKLFSTDCIFLRKSLNI. The tract at residues 186–207 is disordered; sequence AQRLKEEDLRHDDSYATCSYQH. Residues 188 to 199 show a composition bias toward basic and acidic residues; that stretch reads RLKEEDLRHDDS.

This Xenopus tropicalis (Western clawed frog) protein is LysM and putative peptidoglycan-binding domain-containing protein 2 (lysmd2).